The sequence spans 527 residues: Cytochrome P450 monooxygenase aba2 (527 aa).

The helical transmembrane segment at 26–46 threads the bilayer; that stretch reads TTVAVLVTVALIAQVLWKIFF. 3 N-linked (GlcNAc...) asparagine glycosylation sites follow: asparagine 189, asparagine 420, and asparagine 448. Heme is bound at residue cysteine 460. Asparagine 464 carries an N-linked (GlcNAc...) asparagine glycan.

It belongs to the cytochrome P450 family. Heme serves as cofactor.

The protein localises to the membrane. It participates in hormone biosynthesis. Functionally, cytochrome P450 monooxygenase; part of the gene cluster that mediates the biosynthesis of abscisic acid (ABA), a phytohormone that acts antagonistically toward salicylic acid (SA), jasmonic acid (JA) and ethylene (ETH) signaling, to impede plant defense responses. The first step of the pathway catalyzes the reaction from farnesyl diphosphate to alpha-ionylideneethane performed by the alpha-ionylideneethane synthase aba3 via a three-step reaction mechanism involving 2 neutral intermediates, beta-farnesene and allofarnesene. The cytochrome P450 monooxygenase aba1 might then be involved in the conversion of alpha-ionylideneethane to alpha-ionylideneacetic acid. Alpha-ionylideneacetic acid is further converted to abscisic acid in 2 steps involving the cytochrome P450 monooxygenase aba2 and the short-chain dehydrogenase/reductase aba4, via the intermediates 1'-deoxy-ABA or 1',4'-trans-diol-ABA, depending on the order of action of these 2 enzymes. Aba2 is responsible for the hydroxylation of carbon atom C-1' and aba4 might be involved in the oxidation of the C-4' carbon atom. The polypeptide is Cytochrome P450 monooxygenase aba2 (aba2) (Botryotinia fuckeliana (strain B05.10) (Noble rot fungus)).